The chain runs to 310 residues: Terpene synthase 6 (310 aa).

The short motif at 93 to 98 (DDFYFE) is the DDxx(x)D/E motif element. An NDxxSxxxD/E motif motif is present at residues 222 to 230 (NDCYSFNKE).

Belongs to the terpene synthase family.

It carries out the reaction (2E,6E)-farnesyl diphosphate = (E)-beta-farnesene + diphosphate. The enzyme catalyses (2E,6E)-farnesyl diphosphate = (1S,2S,4R)-beta-elemene + diphosphate. It catalyses the reaction (2E,6E)-farnesyl diphosphate = (3E,6E)-alpha-farnesene + diphosphate. Terpene synthase that converts its substrate farnesyl diphosphate (FPP) into the sesquiterpenes beta-elemene, (E)-beta-farnesene and (E,E)-alpha-farnesene. This Dictyostelium purpureum (Slime mold) protein is Terpene synthase 6.